We begin with the raw amino-acid sequence, 1241 residues long: MEEDEPMGGGESEPEQRKSGTPRLYIKELVMRNFKSYAGEQRVGPFHKSFSAVVGPNGSGKSNVIDAMLFVFGKRAKQMRLNKVSELIHNSTNHQNLDSAGVSVQFEEIIDLENGLYETVPGSDFMITRVAFRDNSSKYYINERSSNFTEVTKKLKGKGVDLDNNRFLILQGEVEQISLMKPKAQGPHDEGFLEYLEDIIGTNKYVEKIDELNKQLETLNESRSGVVQMVKLAEKERDNLEGLKDEAETYMLKELSHLKWQEKATKMAYEDTVAKITEQRDSLQNLENSLKDERVKMDESNEELKKFESVHEKHKKRQEVLDNELRACKEKFKEFERQDVKHREDLKHVKQKIKKLEDKLEKDSSKIGDMTKESEDSSNLIPKLQENIPKLQKVLLDEEKKLEEIKAIAKVETEGYRSELTKIRAELEPWEKDLIVHRGKLDVASSESELLSKKHEAALKAFTDAQKQLSDISTRKKEKAAATTSWKADIKKKKQEAIEARKVEEESLKEQETLVPQEQAAREKVAELKSAMNSEKSQNEVLKAVLRAKENNQIEGIYGRMGDLGAIDAKYDVAISTACAGLDYIVVETTSSAQACVELLRKGNLGFATFMILEKQTDHIHKLKEKVKTPEDVPRLFDLVRVKDERMKLAFYAALGNTVVAKDLDQATRIAYGGNREFRRVVALDGALFEKSGTMSGGGGKARGGRMGTSIRATGVSGEAVANAENELSKIVDMLNNIREKVGNAVRQYRAAENEVSGLEMELAKSQREIESLNSEHNYLEKQLASLEAASQPKTDEIDRLKELKKIISKEEKEIENLEKGSKQLKDKLQTNIENAGGEKLKGQKAKVEKIQTDIDKNNTEINRCNVQIETNQKLIKKLTKGIEEATREKERLEGEKENLHVTFKDITQKAFEIQETYKKTQQLIDEHKDVLTGAKSDYENLKKSVDELKASRVDAEFKVQDMKKKYNELEMREKGYKKKLNDLQIAFTKHMEQIQKDLVDPDKLQATLMDNNLNEACDLKRALEMVALLEAQLKELNPNLDSIAEYRSKVELYNGRVDELNSVTQERDDTRKQYDELRKRRLDEFMAGFNTISLKLKEMYQMITLGGDAELELVDSLDPFSEGVVFSVRPPKKSWKNIANLSGGEKTLSSLALVFALHHYKPTPLYVMDEIDAALDFKNVSIVGHYVKDRTKDAQFIIISLRNNMFELADRLVGIYKTDNCTKSITINPGSFAVCQKTPA.

Met1 is modified (N-acetylmethionine). Residues 1 to 22 (MEEDEPMGGGESEPEQRKSGTP) form a disordered region. The region spanning 25–1224 (YIKELVMRNF…GIYKTDNCTK (1200 aa)) is the Zinc-hook domain. ATP is bound at residue 55-62 (GPNGSGKS). Residues 201–552 (GTNKYVEKID…KAVLRAKENN (352 aa)) are a coiled coil. An SMC hinge domain is found at 555–671 (EGIYGRMGDL…KDLDQATRIA (117 aa)). The stretch at 719 to 1085 (EAVANAENEL…DELRKRRLDE (367 aa)) forms a coiled coil.

The protein belongs to the SMC family. SMC4 subfamily. In terms of assembly, forms a heterodimer with a SMC2 subfamily member. Component of the condensin complex, which contains the SMC2 and SMC4 heterodimer, and three non SMC subunits that probably regulate the complex: CAPH, CAPD2 and CAPG. In terms of tissue distribution, highly expressed in seedlings and inflorescences.

It localises to the nucleus. Central component of the condensin complex, a complex required for conversion of interphase chromatin into mitotic-like condense chromosomes. The condensin complex probably introduces positive supercoils into relaxed DNA in the presence of type I topoisomerases and converts nicked DNA into positive knotted forms in the presence of type II topoisomerases. Also involved in chromosome segregation in meiosis. The sequence is that of Structural maintenance of chromosomes protein 4 (SMC4) from Arabidopsis thaliana (Mouse-ear cress).